A 310-amino-acid polypeptide reads, in one-letter code: D-alanyl-D-alanine endopeptidase (310 aa).

The N-terminal stretch at 1 to 23 (MRNRLLSLVTLFLSLSVATAVSA) is a signal peptide. Serine 66 serves as the catalytic Acyl-ester intermediate. The active-site Proton acceptor is the lysine 69. Serine 123 is a catalytic residue. Residue lysine 230 coordinates substrate.

The protein belongs to the peptidase S11 family.

The protein localises to the periplasm. Cell wall formation. The polypeptide is D-alanyl-D-alanine endopeptidase (pbpG) (Pseudomonas aeruginosa (strain ATCC 15692 / DSM 22644 / CIP 104116 / JCM 14847 / LMG 12228 / 1C / PRS 101 / PAO1)).